The chain runs to 65 residues: Large ribosomal subunit protein uL29 (65 aa).

Belongs to the universal ribosomal protein uL29 family.

In Bacteroides thetaiotaomicron (strain ATCC 29148 / DSM 2079 / JCM 5827 / CCUG 10774 / NCTC 10582 / VPI-5482 / E50), this protein is Large ribosomal subunit protein uL29.